A 28-amino-acid chain; its full sequence is Conotoxin as14b (28 aa).

Disulfide bonds link Cys-7/Cys-27 and Cys-11/Cys-23.

Belongs to the conotoxin L superfamily. In terms of tissue distribution, expressed by the venom duct.

It is found in the secreted. In terms of biological role, in vivo, intracranial injection elicits scratching and grooming activity in mice, and causes body and rear limb extension and tail curling immediately upon injection. In Conus cancellatus (Cancellate cone), this protein is Conotoxin as14b.